We begin with the raw amino-acid sequence, 20 residues long: Thylakoid lumenal 22 kDa protein (20 aa).

The protein resides in the plastid. Its subcellular location is the chloroplast thylakoid lumen. This is Thylakoid lumenal 22 kDa protein from Spinacia oleracea (Spinach).